Consider the following 364-residue polypeptide: DNA replication and repair protein RecF (364 aa).

Gly30–Thr37 serves as a coordination point for ATP.

The protein belongs to the RecF family.

The protein localises to the cytoplasm. Its function is as follows. The RecF protein is involved in DNA metabolism; it is required for DNA replication and normal SOS inducibility. RecF binds preferentially to single-stranded, linear DNA. It also seems to bind ATP. In Pelotomaculum thermopropionicum (strain DSM 13744 / JCM 10971 / SI), this protein is DNA replication and repair protein RecF.